The chain runs to 603 residues: Probable GMP synthase [glutamine-hydrolyzing] (603 aa).

Positions 6–195 (KIAVVDFGGQ…FIQICGVSKT (190 aa)) constitute a Glutamine amidotransferase type-1 domain. Cysteine 81 functions as the Nucleophile in the catalytic mechanism. Active-site residues include histidine 170 and glutamate 172. In terms of domain architecture, GMPS ATP-PPase spans 196–392 (WGIDQFLKEK…LGLESEWVGR (197 aa)). Residue 224-230 (SGGVDST) coordinates ATP.

As to quaternary structure, homodimer.

It carries out the reaction XMP + L-glutamine + ATP + H2O = GMP + L-glutamate + AMP + diphosphate + 2 H(+). Its pathway is purine metabolism; GMP biosynthesis; GMP from XMP (L-Gln route): step 1/1. Catalyzes the synthesis of GMP from XMP. The protein is Probable GMP synthase [glutamine-hydrolyzing] (guaA) of Leptospira interrogans serogroup Icterohaemorrhagiae serovar copenhageni (strain Fiocruz L1-130).